We begin with the raw amino-acid sequence, 671 residues long: DNA ligase (671 aa).

Residues 32 to 36 (DAEYD), 81 to 82 (SL), and glutamate 113 each bind NAD(+). Lysine 115 (N6-AMP-lysine intermediate) is an active-site residue. NAD(+) is bound by residues arginine 136, glutamate 173, lysine 290, and lysine 314. Cysteine 408, cysteine 411, cysteine 426, and cysteine 432 together coordinate Zn(2+). Positions 593–671 (EIDSPFAGKT…ETEMLRLLGS (79 aa)) constitute a BRCT domain.

Belongs to the NAD-dependent DNA ligase family. LigA subfamily. The cofactor is Mg(2+). Mn(2+) serves as cofactor.

The enzyme catalyses NAD(+) + (deoxyribonucleotide)n-3'-hydroxyl + 5'-phospho-(deoxyribonucleotide)m = (deoxyribonucleotide)n+m + AMP + beta-nicotinamide D-nucleotide.. In terms of biological role, DNA ligase that catalyzes the formation of phosphodiester linkages between 5'-phosphoryl and 3'-hydroxyl groups in double-stranded DNA using NAD as a coenzyme and as the energy source for the reaction. It is essential for DNA replication and repair of damaged DNA. The protein is DNA ligase of Escherichia coli O81 (strain ED1a).